Reading from the N-terminus, the 356-residue chain is DNA polymerase IV (356 aa).

A UmuC domain is found at 6–187 (IIHIDMDYFF…LDIGDFPGVG (182 aa)). Mg(2+)-binding residues include D10 and D105. The active site involves E106.

This sequence belongs to the DNA polymerase type-Y family. Monomer. It depends on Mg(2+) as a cofactor.

It localises to the cytoplasm. The catalysed reaction is DNA(n) + a 2'-deoxyribonucleoside 5'-triphosphate = DNA(n+1) + diphosphate. In terms of biological role, poorly processive, error-prone DNA polymerase involved in untargeted mutagenesis. Copies undamaged DNA at stalled replication forks, which arise in vivo from mismatched or misaligned primer ends. These misaligned primers can be extended by PolIV. Exhibits no 3'-5' exonuclease (proofreading) activity. May be involved in translesional synthesis, in conjunction with the beta clamp from PolIII. In Staphylococcus aureus (strain Mu50 / ATCC 700699), this protein is DNA polymerase IV.